The primary structure comprises 250 residues: DNA repair protein RecO (250 aa).

Belongs to the RecO family.

Functionally, involved in DNA repair and RecF pathway recombination. In Rhodopseudomonas palustris (strain TIE-1), this protein is DNA repair protein RecO.